Here is a 280-residue protein sequence, read N- to C-terminus: ATP synthase gamma chain (280 aa).

This sequence belongs to the ATPase gamma chain family. F-type ATPases have 2 components, CF(1) - the catalytic core - and CF(0) - the membrane proton channel. CF(1) has five subunits: alpha(3), beta(3), gamma(1), delta(1), epsilon(1). CF(0) has three main subunits: a, b and c.

It is found in the cell membrane. Functionally, produces ATP from ADP in the presence of a proton gradient across the membrane. The gamma chain is believed to be important in regulating ATPase activity and the flow of protons through the CF(0) complex. This Mycoplasma mycoides subsp. mycoides SC (strain CCUG 32753 / NCTC 10114 / PG1) protein is ATP synthase gamma chain.